A 674-amino-acid polypeptide reads, in one-letter code: DNA ligase (674 aa).

Residues 42–46 (DNVYD), 91–92 (SM), and Glu-121 each bind NAD(+). Lys-123 acts as the N6-AMP-lysine intermediate in catalysis. NAD(+)-binding residues include Arg-144, Glu-178, Lys-294, and Lys-318. Cys-412, Cys-415, Cys-430, and Cys-435 together coordinate Zn(2+). Positions 596 to 674 (VKDSFVAGKT…ETELLANLKD (79 aa)) constitute a BRCT domain.

The protein belongs to the NAD-dependent DNA ligase family. LigA subfamily. Mg(2+) is required as a cofactor. The cofactor is Mn(2+).

It catalyses the reaction NAD(+) + (deoxyribonucleotide)n-3'-hydroxyl + 5'-phospho-(deoxyribonucleotide)m = (deoxyribonucleotide)n+m + AMP + beta-nicotinamide D-nucleotide.. DNA ligase that catalyzes the formation of phosphodiester linkages between 5'-phosphoryl and 3'-hydroxyl groups in double-stranded DNA using NAD as a coenzyme and as the energy source for the reaction. It is essential for DNA replication and repair of damaged DNA. The sequence is that of DNA ligase from Lacticaseibacillus casei (strain BL23) (Lactobacillus casei).